Consider the following 42-residue polypeptide: uncharacterized protein (42 aa).

The disordered stretch occupies residues 20 to 42; it reads RSGRAERGVRAHSPAWSERPTPN.

This is an uncharacterized protein from Escherichia coli.